Consider the following 238-residue polypeptide: Ribonuclease PH (238 aa).

Phosphate is bound by residues Arg86 and 124–126 (GTR).

The protein belongs to the RNase PH family. As to quaternary structure, homohexameric ring arranged as a trimer of dimers.

It carries out the reaction tRNA(n+1) + phosphate = tRNA(n) + a ribonucleoside 5'-diphosphate. In terms of biological role, phosphorolytic 3'-5' exoribonuclease that plays an important role in tRNA 3'-end maturation. Removes nucleotide residues following the 3'-CCA terminus of tRNAs; can also add nucleotides to the ends of RNA molecules by using nucleoside diphosphates as substrates, but this may not be physiologically important. Probably plays a role in initiation of 16S rRNA degradation (leading to ribosome degradation) during starvation. This Geobacter metallireducens (strain ATCC 53774 / DSM 7210 / GS-15) protein is Ribonuclease PH.